The following is a 366-amino-acid chain: ACP-SH:acetate ligase (366 aa).

It localises to the cytoplasm. The enzyme catalyses holo-[ACP] + acetate + ATP = acetyl-[ACP] + AMP + diphosphate. Its function is as follows. Acyl-carrier protein (ACP) acetate ligase of the biotin-dependent malonate decarboxylase multienzyme complex (EC 7.2.4.4). Involved in the conversion of the thiol group of the ACP-bound 2'-(5-phosphoribosyl)-3'-dephospho-CoA prosthetic group into its acetyl thioester using the energy from the hydrolysis of ATP. The chain is ACP-SH:acetate ligase (madH) from Malonomonas rubra.